The chain runs to 232 residues: Syntaxin-51 (232 aa).

Topologically, residues 1 to 208 (MASSSDSWMR…NKNMRSGCSC (208 aa)) are cytoplasmic. Residues 136 to 198 (RQVMREQDEG…RRVQKSLAVM (63 aa)) enclose the t-SNARE coiled-coil homology domain. A helical; Anchor for type IV membrane protein transmembrane segment spans residues 209 to 229 (MSMLLSVLGIVGLAVVIWMLV). At 230–232 (KYM) the chain is on the vesicular side.

Belongs to the syntaxin family. Interacts with VTI11 and either SYP21, or SYP22, or SYP61 in the prevacuolar compartment, or with VTI12 and SYP61 in the trans-Golgi network to form t-SNARE complexes. Expressed in root, leaf, stem, flower and silique.

Its subcellular location is the golgi apparatus. The protein resides in the trans-Golgi network membrane. It localises to the prevacuolar compartment membrane. In terms of biological role, vesicle trafficking protein that functions in the secretory pathway. This is Syntaxin-51 (SYP51) from Arabidopsis thaliana (Mouse-ear cress).